The chain runs to 516 residues: NAD(P)H-quinone oxidoreductase chain 4, chloroplastic (516 aa).

14 helical membrane passes run 4–24 (FPWLTIIVVFPILTGSLIFLL), 37–57 (LCICILELLLTTYTFCYHFQL), 87–107 (IGPILLTGFITTLATLAAWPV), 111–131 (AQLFHFLMLAMYSGQIGSFSS), 134–154 (LLLFFLMWEFELIPVYLLLSM), 167–187 (FILYTAGGSIFLLIGVLGIGL), 208–228 (ALEVIFYVGFLIAFAVKLPII), 242–262 (HYSTCMLLAGILLKMGAYGLV), 272–292 (AHCLFSPGLIIVGAIQIIYAA), 305–325 (IAYSSISHMGFIIIGIGSLSD), 330–350 (GAILQIISHGFIGAALFFLAG), 386–406 (LALPGLSGFVAELLVFFGIIT), 416–436 (ILIAFLMAIGMILTPIYSLSM), and 462–482 (LFVSISLLLPIIGIGIYPDFV).

Belongs to the complex I subunit 4 family.

It localises to the plastid. Its subcellular location is the chloroplast thylakoid membrane. The enzyme catalyses a plastoquinone + NADH + (n+1) H(+)(in) = a plastoquinol + NAD(+) + n H(+)(out). It carries out the reaction a plastoquinone + NADPH + (n+1) H(+)(in) = a plastoquinol + NADP(+) + n H(+)(out). The chain is NAD(P)H-quinone oxidoreductase chain 4, chloroplastic from Oenothera argillicola (Appalachian evening primrose).